Here is a 23-residue protein sequence, read N- to C-terminus: Caerin-4.2 (23 aa).

In terms of tissue distribution, expressed by the skin parotoid and/or rostral glands.

The protein resides in the secreted. Functionally, antibacterial peptide, that adopts an alpha helical conformation which can disrupt bacterial membranes. Each caerin displays a different antimicrobial specificity. This is Caerin-4.2 from Ranoidea caerulea (Green tree frog).